The chain runs to 310 residues: Porphobilinogen deaminase (310 aa).

C240 is subject to S-(dipyrrolylmethanemethyl)cysteine.

It belongs to the HMBS family. In terms of assembly, monomer. Requires dipyrromethane as cofactor.

It carries out the reaction 4 porphobilinogen + H2O = hydroxymethylbilane + 4 NH4(+). The protein operates within porphyrin-containing compound metabolism; protoporphyrin-IX biosynthesis; coproporphyrinogen-III from 5-aminolevulinate: step 2/4. Tetrapolymerization of the monopyrrole PBG into the hydroxymethylbilane pre-uroporphyrinogen in several discrete steps. This Desulfosudis oleivorans (strain DSM 6200 / JCM 39069 / Hxd3) (Desulfococcus oleovorans) protein is Porphobilinogen deaminase.